Here is a 391-residue protein sequence, read N- to C-terminus: MKFIDEALIRVEAGDGGNGCVSFRREKYIPKGGPDGGDGGDGGDVYLIADENLNTLIDYRFEKRYAAGRGENGRSAGCTGHRGNDITLRVPVGTRAIDNDTKEVIGDLTQHGMKMLVAKGGYHGLGNTRFKSSVNRAPRQKTNGTAGEKRDLLLELMLLADVGMLGLPNAGKSTFIRSVSAAKPKVADYPFTTLVPSLGVARVGSDRSFVVADIPGLIEGAAEGAGLGIRFLKHLERCRVLIHLVDIMPIDESDPVQNITVIESELYQYSEKLADKPTWLVFNKIDTIGEEIAAEQAKNIAEQIGWQGDYYLISAATGQNVQQLTRDIMDFIEANPRQIIEENKALDEVKFKWDDYHQQAMQHPVEEDWSDFDDEWSEEDEEGVEIIYERG.

The region spanning 1-159 (MKFIDEALIR…RDLLLELMLL (159 aa)) is the Obg domain. An OBG-type G domain is found at 160-333 (ADVGMLGLPN…LTRDIMDFIE (174 aa)). GTP is bound by residues 166–173 (GLPNAGKS), 191–195 (FTTLV), 213–216 (DIPG), 283–286 (NKID), and 314–316 (SAA). The Mg(2+) site is built by serine 173 and threonine 193.

This sequence belongs to the TRAFAC class OBG-HflX-like GTPase superfamily. OBG GTPase family. Monomer. Requires Mg(2+) as cofactor.

It localises to the cytoplasm. In terms of biological role, an essential GTPase which binds GTP, GDP and possibly (p)ppGpp with moderate affinity, with high nucleotide exchange rates and a fairly low GTP hydrolysis rate. Plays a role in control of the cell cycle, stress response, ribosome biogenesis and in those bacteria that undergo differentiation, in morphogenesis control. The polypeptide is GTPase Obg (Haemophilus ducreyi (strain 35000HP / ATCC 700724)).